The chain runs to 516 residues: 2-isopropylmalate synthase (516 aa).

One can recognise a Pyruvate carboxyltransferase domain in the interval V5–S267. 4 residues coordinate Mn(2+): D14, H202, H204, and N238. Positions K392 to V516 are regulatory domain.

Belongs to the alpha-IPM synthase/homocitrate synthase family. LeuA type 1 subfamily. As to quaternary structure, homodimer. Requires Mn(2+) as cofactor.

It localises to the cytoplasm. It carries out the reaction 3-methyl-2-oxobutanoate + acetyl-CoA + H2O = (2S)-2-isopropylmalate + CoA + H(+). It functions in the pathway amino-acid biosynthesis; L-leucine biosynthesis; L-leucine from 3-methyl-2-oxobutanoate: step 1/4. Its function is as follows. Catalyzes the condensation of the acetyl group of acetyl-CoA with 3-methyl-2-oxobutanoate (2-ketoisovalerate) to form 3-carboxy-3-hydroxy-4-methylpentanoate (2-isopropylmalate). In Vibrio cholerae serotype O1 (strain ATCC 39315 / El Tor Inaba N16961), this protein is 2-isopropylmalate synthase.